The chain runs to 259 residues: Major cell-binding factor (259 aa).

The first 26 residues, 1-26 (MVFRKSLLKLAVFALGACVAFSNANA), serve as a signal peptide directing secretion.

Belongs to the bacterial solute-binding protein 3 family.

Its subcellular location is the cell surface. Common antigen and a major cell adherence molecule. Most probably involved, with PEB1C, in a binding-protein-dependent transport system for an amino acid. May be involved in binding to intestinal cells. The chain is Major cell-binding factor (peb1A) from Campylobacter jejuni subsp. jejuni serotype O:2 (strain ATCC 700819 / NCTC 11168).